Reading from the N-terminus, the 325-residue chain is Aldose 1-epimerase (325 aa).

73–74 provides a ligand contact to substrate; the sequence is NR. His-177 functions as the Proton donor in the catalytic mechanism. Position 230 (Asp-230) interacts with substrate. Residue Glu-283 is the Proton acceptor of the active site.

It belongs to the aldose epimerase family.

The catalysed reaction is alpha-D-glucose = beta-D-glucose. The protein operates within carbohydrate metabolism; hexose metabolism. This Bacillus subtilis (strain 168) protein is Aldose 1-epimerase (galM).